A 217-amino-acid polypeptide reads, in one-letter code: Response regulator RR06 (217 aa).

The 114-residue stretch at 2-115 (NILVADDEEM…LLVKRIKALI (114 aa)) folds into the Response regulatory domain. D51 bears the 4-aspartylphosphate mark. Positions 122 to 217 (EDIWRYQDVT…VKNVGYKISL (96 aa)) form a DNA-binding region, ompR/PhoB-type.

Post-translationally, phosphorylated at threonine residues by StkP; threonine phosphorylation enhances RR06 binding to DNA and may also increase expression of CbpA. May be de-phosphorylated by PhpP.

In terms of biological role, member of the two-component regulatory system HK06/RR06 involved in regulation of target genes, including choline-binding protein CbpA. Binds to the promoter region of CbpA and directly activates transcription. The protein is Response regulator RR06 of Streptococcus pneumoniae serotype 2 (strain D39 / NCTC 7466).